The chain runs to 178 residues: Phosphopantetheine adenylyltransferase (178 aa).

Ser-8 is a substrate binding site. ATP contacts are provided by residues Ser-8–Phe-9 and His-16. Substrate is bound by residues Lys-40, Thr-72, and Arg-86. ATP is bound by residues Gly-87–Arg-89, Glu-97, and Tyr-122–Ser-128.

Belongs to the bacterial CoaD family. In terms of assembly, homohexamer. Mg(2+) serves as cofactor.

It is found in the cytoplasm. It catalyses the reaction (R)-4'-phosphopantetheine + ATP + H(+) = 3'-dephospho-CoA + diphosphate. Its pathway is cofactor biosynthesis; coenzyme A biosynthesis; CoA from (R)-pantothenate: step 4/5. Functionally, reversibly transfers an adenylyl group from ATP to 4'-phosphopantetheine, yielding dephospho-CoA (dPCoA) and pyrophosphate. The polypeptide is Phosphopantetheine adenylyltransferase (Picosynechococcus sp. (strain ATCC 27264 / PCC 7002 / PR-6) (Agmenellum quadruplicatum)).